The sequence spans 363 residues: tRNA N6-adenosine threonylcarbamoyltransferase (363 aa).

Residues histidine 121 and histidine 125 each contribute to the Fe cation site. Substrate-binding positions include 143–147, aspartate 176, glycine 189, and asparagine 287; that span reads LASGG. Aspartate 315 lines the Fe cation pocket.

The protein belongs to the KAE1 / TsaD family. Fe(2+) serves as cofactor.

The protein resides in the cytoplasm. The enzyme catalyses L-threonylcarbamoyladenylate + adenosine(37) in tRNA = N(6)-L-threonylcarbamoyladenosine(37) in tRNA + AMP + H(+). In terms of biological role, required for the formation of a threonylcarbamoyl group on adenosine at position 37 (t(6)A37) in tRNAs that read codons beginning with adenine. Is involved in the transfer of the threonylcarbamoyl moiety of threonylcarbamoyl-AMP (TC-AMP) to the N6 group of A37, together with TsaE and TsaB. TsaD likely plays a direct catalytic role in this reaction. This Rhodopseudomonas palustris (strain BisA53) protein is tRNA N6-adenosine threonylcarbamoyltransferase.